Reading from the N-terminus, the 353-residue chain is Photosystem II protein D1 (353 aa).

Threonine 2 bears the N-acetylthreonine mark. Residue threonine 2 is modified to Phosphothreonine. 3 helical membrane passes run 29 to 46 (YIGW…TATS), 118 to 133 (HFLL…EWEL), and 142 to 156 (WIAV…AATA). Histidine 118 provides a ligand contact to chlorophyll a. Residue tyrosine 126 participates in pheophytin a binding. The [CaMn4O5] cluster site is built by aspartate 170 and glutamate 189. The helical transmembrane segment at 197–218 (FHMLGVAGVFGGSLFSAMHGSL) threads the bilayer. Histidine 198 lines the chlorophyll a pocket. A quinone is bound by residues histidine 215 and 264 to 265 (SF). Histidine 215 serves as a coordination point for Fe cation. Histidine 272 contributes to the Fe cation binding site. A helical membrane pass occupies residues 274–288 (FLAAWPVAGIWFTAL). [CaMn4O5] cluster contacts are provided by histidine 332, glutamate 333, aspartate 342, and alanine 344. A propeptide spanning residues 345 to 353 (AVESISIGG) is cleaved from the precursor.

It belongs to the reaction center PufL/M/PsbA/D family. PSII is composed of 1 copy each of membrane proteins PsbA, PsbB, PsbC, PsbD, PsbE, PsbF, PsbH, PsbI, PsbJ, PsbK, PsbL, PsbM, PsbT, PsbX, PsbY, PsbZ, Psb30/Ycf12, at least 3 peripheral proteins of the oxygen-evolving complex and a large number of cofactors. It forms dimeric complexes. The D1/D2 heterodimer binds P680, chlorophylls that are the primary electron donor of PSII, and subsequent electron acceptors. It shares a non-heme iron and each subunit binds pheophytin, quinone, additional chlorophylls, carotenoids and lipids. D1 provides most of the ligands for the Mn4-Ca-O5 cluster of the oxygen-evolving complex (OEC). There is also a Cl(-1) ion associated with D1 and D2, which is required for oxygen evolution. The PSII complex binds additional chlorophylls, carotenoids and specific lipids. is required as a cofactor. Tyr-161 forms a radical intermediate that is referred to as redox-active TyrZ, YZ or Y-Z. Post-translationally, C-terminally processed by CTPA; processing is essential to allow assembly of the oxygen-evolving complex and thus photosynthetic growth.

It is found in the plastid. It localises to the chloroplast thylakoid membrane. The catalysed reaction is 2 a plastoquinone + 4 hnu + 2 H2O = 2 a plastoquinol + O2. Its function is as follows. Photosystem II (PSII) is a light-driven water:plastoquinone oxidoreductase that uses light energy to abstract electrons from H(2)O, generating O(2) and a proton gradient subsequently used for ATP formation. It consists of a core antenna complex that captures photons, and an electron transfer chain that converts photonic excitation into a charge separation. The D1/D2 (PsbA/PsbD) reaction center heterodimer binds P680, the primary electron donor of PSII as well as several subsequent electron acceptors. The chain is Photosystem II protein D1 from Pinus contorta (Shore pine).